The following is a 134-amino-acid chain: Transcription antitermination protein NusB (134 aa).

This sequence belongs to the NusB family.

Its function is as follows. Involved in transcription antitermination. Required for transcription of ribosomal RNA (rRNA) genes. Binds specifically to the boxA antiterminator sequence of the ribosomal RNA (rrn) operons. This Shewanella frigidimarina (strain NCIMB 400) protein is Transcription antitermination protein NusB.